Reading from the N-terminus, the 366-residue chain is Chorismate synthase (366 aa).

R47 lines the NADP(+) pocket. Residues 124–126, G286, 301–305, and R327 each bind FMN; these read RSS and KPVAT.

The protein belongs to the chorismate synthase family. Homotetramer. Requires FMNH2 as cofactor.

The enzyme catalyses 5-O-(1-carboxyvinyl)-3-phosphoshikimate = chorismate + phosphate. It functions in the pathway metabolic intermediate biosynthesis; chorismate biosynthesis; chorismate from D-erythrose 4-phosphate and phosphoenolpyruvate: step 7/7. Catalyzes the anti-1,4-elimination of the C-3 phosphate and the C-6 proR hydrogen from 5-enolpyruvylshikimate-3-phosphate (EPSP) to yield chorismate, which is the branch point compound that serves as the starting substrate for the three terminal pathways of aromatic amino acid biosynthesis. This reaction introduces a second double bond into the aromatic ring system. This is Chorismate synthase from Methylacidiphilum infernorum (isolate V4) (Methylokorus infernorum (strain V4)).